A 167-amino-acid polypeptide reads, in one-letter code: Large ribosomal subunit protein uL10 (167 aa).

Belongs to the universal ribosomal protein uL10 family. In terms of assembly, part of the ribosomal stalk of the 50S ribosomal subunit. The N-terminus interacts with L11 and the large rRNA to form the base of the stalk. The C-terminus forms an elongated spine to which L12 dimers bind in a sequential fashion forming a multimeric L10(L12)X complex.

Functionally, forms part of the ribosomal stalk, playing a central role in the interaction of the ribosome with GTP-bound translation factors. This chain is Large ribosomal subunit protein uL10, found in Ligilactobacillus salivarius (strain UCC118) (Lactobacillus salivarius).